A 431-amino-acid polypeptide reads, in one-letter code: GDP-L-galactose phosphorylase 2 (431 aa).

Catalysis depends on histidine 235, which acts as the Tele-GMP-histidine intermediate. Acidic residues predominate over residues 398 to 407 (EEEEEEELEE). The segment at 398–417 (EEEEEEELEEQNSMNGGSFT) is disordered.

The protein belongs to the GDPGP1 family. As to quaternary structure, interacts with TLP1. In terms of tissue distribution, expressed in leaves, stems, roots, flowers and siliques.

The protein localises to the cytoplasm. The protein resides in the nucleus. The enzyme catalyses GDP-beta-L-galactose + phosphate = beta-L-galactose 1-phosphate + GDP + H(+). Its pathway is cofactor biosynthesis; L-ascorbate biosynthesis via GDP-alpha-D-mannose pathway; L-ascorbate from GDP-alpha-D-mannose: step 2/5. Its function is as follows. Catalyzes a reaction of the Smirnoff-Wheeler pathway, the major route to ascorbate biosynthesis in plants. Acts as a phosphorylase rather than as a transferase. Uses preferentially GDP-L-galactose and GDP-D-glucose as substrates. Lower activity with GDP-L-fucose, very low activity with GDP-D-mannose, and no activity with UDP-D-glucose, UDP-D-galactose or ADP-D-glucose. Highly specific for inorganic phosphate as the guanylyl acceptor. This chain is GDP-L-galactose phosphorylase 2 (VTC5), found in Arabidopsis thaliana (Mouse-ear cress).